Reading from the N-terminus, the 505-residue chain is Nostrin (505 aa).

Positions 1–260 (MRDPLTDCSY…AISKIDIEKD (260 aa)) constitute an F-BAR domain. Coiled coils occupy residues 101-128 (AHQV…LVIS), 160-222 (ITTE…RIQL), and 295-332 (KERQ…AYSS). Serine 114 carries the post-translational modification Phosphoserine. The 81-residue stretch at 292–372 (AMSKERQTSS…SYKLSSVLAE (81 aa)) folds into the REM-1 domain. The 60-residue stretch at 437 to 496 (LGNGLCKALYPFQARQDDELDLEKGDIVTIHKKKDEGWWFGSLKGKKGHFPAAYVEELPL) folds into the SH3 domain. Serine 478 carries the post-translational modification Phosphoserine.

In terms of assembly, homotrimer. Interacts with DAB2. Interacts with NOS3, DNM2, WASL and CAV1. Interacts (via SH3 domain) with DNM2; this interaction allows the recruitment of NOS3 to dynamin-positive structures. In terms of tissue distribution, present in pulmonary arterial endothelial cells (at protein level).

The protein resides in the cell membrane. The protein localises to the cytoplasmic vesicle. It is found in the cytoplasm. It localises to the cytoskeleton. Multivalent adapter protein which may decrease NOS3 activity by inducing its translocation away from the plasma membrane. This Bos taurus (Bovine) protein is Nostrin.